A 231-amino-acid polypeptide reads, in one-letter code: Large ribosomal subunit protein uL1 (231 aa).

This sequence belongs to the universal ribosomal protein uL1 family. Part of the 50S ribosomal subunit.

In terms of biological role, binds directly to 23S rRNA. The L1 stalk is quite mobile in the ribosome, and is involved in E site tRNA release. Its function is as follows. Protein L1 is also a translational repressor protein, it controls the translation of the L11 operon by binding to its mRNA. The sequence is that of Large ribosomal subunit protein uL1 from Cupriavidus pinatubonensis (strain JMP 134 / LMG 1197) (Cupriavidus necator (strain JMP 134)).